We begin with the raw amino-acid sequence, 393 residues long: Bone morphogenetic protein 2 (393 aa).

The first 19 residues, 1–19 (MVAGTRCLLVLLLPQVLLG), serve as a signal peptide directing secretion. The propeptide at 20 to 279 (GAAGLIPELG…GHPLHKREKR (260 aa)) is cleaved by PCSK5. A Phosphoserine modification is found at serine 85. N-linked (GlcNAc...) asparagine glycans are attached at residues asparagine 133, asparagine 161, and asparagine 197. A disordered region spans residues 268–290 (GKGHPLHKREKRQAKHKQRKRLK). Residues 271–290 (HPLHKREKRQAKHKQRKRLK) show a composition bias toward basic residues. 3 cysteine pairs are disulfide-bonded: cysteine 293/cysteine 358, cysteine 322/cysteine 390, and cysteine 326/cysteine 392. The N-linked (GlcNAc...) asparagine glycan is linked to asparagine 335.

It belongs to the TGF-beta family. In terms of assembly, homodimer; disulfide-linked. Interacts with SOSTDC1. Interacts with GREM2, RGMA, RGMB and RGMC. Interacts with ASPN. Interacts with MAFP5. Interacts with FBN1 (via N-terminal domain) and FBN2. Interacts with type I receptor BMPR1A. Interacts with type II receptor BMPR2. Interacts with SCUBE3. Interacts with TNFAIP6 (primarily via Link domain); this interaction is inhibited by hyaluronan. Interacts with ERFE. Interacts with BMPR1A/ALK3; the interaction may induce HAMP expression. Forms heterodimers with BMP6 in vitro; the heterodimer then binds to its receptor BMPR1A /ALK3 and may induce HAMP expression. Interacts with TGFBR3. Expressed in femur, calvaria, trachea, lung and ovary.

The protein resides in the secreted. Functionally, growth factor of the TGF-beta superfamily that plays essential roles in many developmental processes, including cardiogenesis, neurogenesis, and osteogenesis. Induces cartilage and bone formation. Initiates the canonical BMP signaling cascade by associating with type I receptor BMPR1A and type II receptor BMPR2. Once all three components are bound together in a complex at the cell surface, BMPR2 phosphorylates and activates BMPR1A. In turn, BMPR1A propagates signal by phosphorylating SMAD1/5/8 that travel to the nucleus and act as activators and repressors of transcription of target genes. Also acts to promote expression of HAMP, via the interaction with its receptor BMPR1A/ALK3. Can also signal through non-canonical pathways such as ERK/MAP kinase signaling cascade that regulates osteoblast differentiation. Also stimulates the differentiation of myoblasts into osteoblasts via the EIF2AK3-EIF2A-ATF4 pathway by stimulating EIF2A phosphorylation which leads to increased expression of ATF4 which plays a central role in osteoblast differentiation. Acts as a positive regulator of odontoblast differentiation during mesenchymal tooth germ formation, expression is repressed during the bell stage by MSX1-mediated inhibition of CTNNB1 signaling. This chain is Bone morphogenetic protein 2 (Bmp2), found in Rattus norvegicus (Rat).